Reading from the N-terminus, the 316-residue chain is Olfactory receptor 10H3 (316 aa).

The Extracellular segment spans residues 1-25 (MPGQNYRTISEFILSGFSAFPQQLL). A helical transmembrane segment spans residues 26–46 (PVLFLLYLLMFLFTLLGNLLI). Topologically, residues 47–54 (MATVWIER) are cytoplasmic. The chain crosses the membrane as a helical span at residues 55-75 (RLHTPMYLFLCALSISEILFT). Residues 76-99 (VAITPRMLADLLFTHRSITFVACA) are Extracellular-facing. A disulfide bridge links Cys98 with Cys190. Residues 100 to 120 (IQMFFSFMFGFTHSFLLMVMG) form a helical membrane-spanning segment. The Cytoplasmic segment spans residues 121–139 (YDHYVTICHPLHYNMLMSP). The helical transmembrane segment at 140-160 (RGCAHLVAWTWAGGSVMGMMV) threads the bilayer. Residues 161 to 197 (TMMVFHLTFCGSNVIHHFLCHVLSLLKLACGSKTSSV) lie on the Extracellular side of the membrane. The helical transmembrane segment at 198–218 (IMGVMLVCVTALIGCLFLIIL) threads the bilayer. Residues 219 to 238 (SFVFIVAAILRIPSAEGRHK) lie on the Cytoplasmic side of the membrane. A helical transmembrane segment spans residues 239–259 (TFSTCVSHLTVVVMHYSFASL). At 260 to 272 (IYLKPKGLHSMYS) the chain is on the extracellular side. Residues 273-293 (DALMATTYTVFTPFLSPIIFS) traverse the membrane as a helical segment. At 294–316 (LRNKELKNAINKNFCRRFCPLSS) the chain is on the cytoplasmic side.

The protein belongs to the G-protein coupled receptor 1 family.

It localises to the cell membrane. Odorant receptor. This is Olfactory receptor 10H3 (OR10H3) from Homo sapiens (Human).